A 612-amino-acid chain; its full sequence is Putative pentatricopeptide repeat-containing protein At5g40405 (612 aa).

PPR repeat units lie at residues 70-104 (TLFA…GNDL), 107-141 (DNYT…GFDN), 142-172 (DPHV…IPCP), 173-203 (DFVC…MPER), 204-238 (DPIA…GVKV), 239-273 (NGVA…KIKI), 274-304 (TVRL…MEEK), 305-339 (NVYT…GVTP), 340-375 (NAVT…GIEP), and 376-410 (QLEH…PHAA). The tract at residues 411–486 (VWSSLLHASR…QPGCSVMEVN (76 aa)) is type E motif. Residues 487–517 (GEVHEFFVGDKSHPKYTQIDAVWKDISRRLR) form a type E(+) motif region. Residues 518-612 (LAGYKADTTP…DGHCSCNGFW (95 aa)) are type DYW motif.

This sequence belongs to the PPR family. PCMP-H subfamily.

This is Putative pentatricopeptide repeat-containing protein At5g40405 (PCMP-H14) from Arabidopsis thaliana (Mouse-ear cress).